The sequence spans 157 residues: Transcription elongation factor GreA (157 aa).

It belongs to the GreA/GreB family.

Its function is as follows. Necessary for efficient RNA polymerase transcription elongation past template-encoded arresting sites. The arresting sites in DNA have the property of trapping a certain fraction of elongating RNA polymerases that pass through, resulting in locked ternary complexes. Cleavage of the nascent transcript by cleavage factors such as GreA or GreB allows the resumption of elongation from the new 3'terminus. GreA releases sequences of 2 to 3 nucleotides. The sequence is that of Transcription elongation factor GreA from Bartonella tribocorum (strain CIP 105476 / IBS 506).